The following is a 605-amino-acid chain: LysM domain receptor-like kinase 10 (605 aa).

The N-terminal stretch at Met1–Ala20 is a signal peptide. Residues Ala21–Ala245 lie on the Extracellular side of the membrane. Intrachain disulfides connect Cys26/Cys89, Cys30/Cys161, and Cys87/Cys159. An N-linked (GlcNAc...) asparagine glycan is attached at Asn44. Chitin contacts are provided by residues Gly115–Ala121 and Pro142–Gly148. Residues Asn154 and Asn158 are each glycosylated (N-linked (GlcNAc...) asparagine). A LysM domain is found at Leu174 to Pro221. Asn226 is a glycosylation site (N-linked (GlcNAc...) asparagine). The helical transmembrane segment at Ile246–Met266 threads the bilayer. The Cytoplasmic segment spans residues Phe267–Phe605. Ser278 is modified (phosphoserine). A Protein kinase domain is found at Phe317–Leu591. ATP-binding positions include Ile323 to Val331 and Lys344. Asp436 (proton acceptor) is an active-site residue.

Belongs to the protein kinase superfamily. Ser/Thr protein kinase family.

It localises to the cell membrane. The enzyme catalyses L-seryl-[protein] + ATP = O-phospho-L-seryl-[protein] + ADP + H(+). It carries out the reaction L-threonyl-[protein] + ATP = O-phospho-L-threonyl-[protein] + ADP + H(+). This chain is LysM domain receptor-like kinase 10, found in Oryza sativa subsp. japonica (Rice).